The following is a 95-amino-acid chain: Aspartyl/glutamyl-tRNA(Asn/Gln) amidotransferase subunit C (95 aa).

This sequence belongs to the GatC family. In terms of assembly, heterotrimer of A, B and C subunits.

It carries out the reaction L-glutamyl-tRNA(Gln) + L-glutamine + ATP + H2O = L-glutaminyl-tRNA(Gln) + L-glutamate + ADP + phosphate + H(+). It catalyses the reaction L-aspartyl-tRNA(Asn) + L-glutamine + ATP + H2O = L-asparaginyl-tRNA(Asn) + L-glutamate + ADP + phosphate + 2 H(+). Its function is as follows. Allows the formation of correctly charged Asn-tRNA(Asn) or Gln-tRNA(Gln) through the transamidation of misacylated Asp-tRNA(Asn) or Glu-tRNA(Gln) in organisms which lack either or both of asparaginyl-tRNA or glutaminyl-tRNA synthetases. The reaction takes place in the presence of glutamine and ATP through an activated phospho-Asp-tRNA(Asn) or phospho-Glu-tRNA(Gln). The chain is Aspartyl/glutamyl-tRNA(Asn/Gln) amidotransferase subunit C from Bradyrhizobium sp. (strain ORS 278).